Here is a 163-residue protein sequence, read N- to C-terminus: Transcription antitermination protein NusB (163 aa).

Residues 1-21 (MTTFLSDSEHPQDVKAPPKSA) are disordered.

Belongs to the NusB family.

In terms of biological role, involved in transcription antitermination. Required for transcription of ribosomal RNA (rRNA) genes. Binds specifically to the boxA antiterminator sequence of the ribosomal RNA (rrn) operons. The chain is Transcription antitermination protein NusB from Dechloromonas aromatica (strain RCB).